The sequence spans 87 residues: Small ribosomal subunit protein bS18 (87 aa).

This sequence belongs to the bacterial ribosomal protein bS18 family. Part of the 30S ribosomal subunit. Forms a tight heterodimer with protein bS6.

Functionally, binds as a heterodimer with protein bS6 to the central domain of the 16S rRNA, where it helps stabilize the platform of the 30S subunit. The chain is Small ribosomal subunit protein bS18 from Campylobacter hominis (strain ATCC BAA-381 / DSM 21671 / CCUG 45161 / LMG 19568 / NCTC 13146 / CH001A).